The following is a 232-amino-acid chain: ATP-dependent dethiobiotin synthetase BioD (232 aa).

16–21 lines the ATP pocket; it reads GVGKTV. Threonine 20 serves as a coordination point for Mg(2+). Lysine 41 is a catalytic residue. Residue threonine 45 participates in substrate binding. ATP is bound by residues aspartate 52, 111–114, 171–172, 200–202, and glutamate 207; these read EGIG, NQ, and PLS. Residues aspartate 52 and glutamate 111 each coordinate Mg(2+).

It belongs to the dethiobiotin synthetase family. In terms of assembly, homodimer. It depends on Mg(2+) as a cofactor.

Its subcellular location is the cytoplasm. It catalyses the reaction (7R,8S)-7,8-diammoniononanoate + CO2 + ATP = (4R,5S)-dethiobiotin + ADP + phosphate + 3 H(+). The enzyme catalyses (7R,8S)-8-amino-7-(carboxyamino)nonanoate + ATP = (4R,5S)-dethiobiotin + ADP + phosphate + H(+). The protein operates within cofactor biosynthesis; biotin biosynthesis; biotin from 7,8-diaminononanoate: step 1/2. Catalyzes a mechanistically unusual reaction, the ATP-dependent insertion of CO2 between the N7 and N8 nitrogen atoms of 7,8-diaminopelargonic acid (DAPA, also called 7,8-diammoniononanoate) to form a ureido ring. This archaea does not encode bioA (which catalyzes the formation of the precursor for this reaction in the cannonical pathway), instead it encodes bioU, which replaces bioA and also performs the first half of the cannonical BioD reaction. Thus in this archaea BioD has a different substrate. The chain is ATP-dependent dethiobiotin synthetase BioD from Haloferax mediterranei (strain ATCC 33500 / DSM 1411 / JCM 8866 / NBRC 14739 / NCIMB 2177 / R-4) (Halobacterium mediterranei).